The primary structure comprises 121 residues: Large ribosomal subunit protein bL20 (121 aa).

Belongs to the bacterial ribosomal protein bL20 family.

Binds directly to 23S ribosomal RNA and is necessary for the in vitro assembly process of the 50S ribosomal subunit. It is not involved in the protein synthesizing functions of that subunit. The chain is Large ribosomal subunit protein bL20 from Orientia tsutsugamushi (strain Boryong) (Rickettsia tsutsugamushi).